The following is a 164-amino-acid chain: Thiol peroxidase (164 aa).

The Thioredoxin domain maps to 18–163 (VSEGQHAPDF…FDAALEAYRN (146 aa)). Cys-60 functions as the Cysteine sulfenic acid (-SOH) intermediate in the catalytic mechanism. A disulfide bridge connects residues Cys-60 and Cys-93.

The protein belongs to the peroxiredoxin family. Tpx subfamily. In terms of assembly, homodimer.

The catalysed reaction is a hydroperoxide + [thioredoxin]-dithiol = an alcohol + [thioredoxin]-disulfide + H2O. In terms of biological role, thiol-specific peroxidase that catalyzes the reduction of hydrogen peroxide and organic hydroperoxides to water and alcohols, respectively. Plays a role in cell protection against oxidative stress by detoxifying peroxides. This chain is Thiol peroxidase, found in Staphylococcus haemolyticus (strain JCSC1435).